Here is a 435-residue protein sequence, read N- to C-terminus: Asparagine--tRNA ligase (435 aa).

It belongs to the class-II aminoacyl-tRNA synthetase family. As to quaternary structure, homodimer.

Its subcellular location is the cytoplasm. The enzyme catalyses tRNA(Asn) + L-asparagine + ATP = L-asparaginyl-tRNA(Asn) + AMP + diphosphate + H(+). The protein is Asparagine--tRNA ligase of Leptospira interrogans serogroup Icterohaemorrhagiae serovar copenhageni (strain Fiocruz L1-130).